Here is a 96-residue protein sequence, read N- to C-terminus: Muconolactone Delta-isomerase 2 (96 aa).

The protein belongs to the muconolactone Delta-isomerase family. In terms of assembly, homodecamer.

It catalyses the reaction (S)-muconolactone = (4,5-dihydro-5-oxofuran-2-yl)-acetate. It functions in the pathway aromatic compound metabolism; beta-ketoadipate pathway; 5-oxo-4,5-dihydro-2-furylacetate from catechol: step 3/3. The chain is Muconolactone Delta-isomerase 2 (catC2) from Acinetobacter lwoffii.